The sequence spans 425 residues: Kynurenine/alpha-aminoadipate aminotransferase, mitochondrial (425 aa).

The N-terminal 29 residues, 1-29 (MNYARFITAASAARNPSPIRTMTDILSRG), are a transit peptide targeting the mitochondrion. R20 is a substrate binding site. N6-acetyllysine is present on K69. Y74 and Y142 together coordinate substrate. K179 is modified (N6-acetyllysine). The segment at 181–208 (EDAKNPQKNTPKFLYTVPNGNNPTGNSL) is disordered. Residues 198–208 (PNGNNPTGNSL) show a composition bias toward polar residues. N202 is a substrate binding site. An N6-(pyridoxal phosphate)lysine; alternate modification is found at K263. An N6-acetyllysine; alternate mark is found at K263, K339, and K367. Residues K263, K339, and K367 each carry the N6-succinyllysine; alternate modification. R399 provides a ligand contact to substrate. K422 bears the N6-acetyllysine mark.

Belongs to the class-I pyridoxal-phosphate-dependent aminotransferase family. As to quaternary structure, homodimer. Requires pyridoxal 5'-phosphate as cofactor. Higher expression in the liver. Also found in heart, brain, kidney, pancreas, prostate, testis and ovary.

The protein localises to the mitochondrion. The enzyme catalyses glycine + 2-oxoglutarate = glyoxylate + L-glutamate. It carries out the reaction L-kynurenine + 2-oxoglutarate = kynurenate + L-glutamate + H2O. The catalysed reaction is L-kynurenine + glyoxylate = kynurenate + glycine + H2O. It catalyses the reaction 3-hydroxy-L-kynurenine + glyoxylate = xanthurenate + glycine + H2O. The enzyme catalyses 2-oxohexanoate + L-kynurenine = L-2-aminohexanoate + kynurenate + H2O. It carries out the reaction 3-phenylpyruvate + L-kynurenine = kynurenate + L-phenylalanine + H2O. The catalysed reaction is 4-methylsulfanyl-2-oxobutanoate + L-kynurenine = kynurenate + L-methionine + H2O. It catalyses the reaction 2-oxo-3-sulfanylpropanoate + L-kynurenine = kynurenate + L-cysteine + H2O. The enzyme catalyses indole-3-pyruvate + L-kynurenine = kynurenate + L-tryptophan + H2O. It carries out the reaction 2-oxopentanoate + L-kynurenine = L-2-aminopentanoate + kynurenate + H2O. The catalysed reaction is 4-methyl-2-oxopentanoate + L-kynurenine = kynurenate + L-leucine + H2O. It catalyses the reaction L-2-aminoadipate + 2-oxoglutarate = 2-oxoadipate + L-glutamate. The enzyme catalyses glyoxylate + L-methionine = 4-methylsulfanyl-2-oxobutanoate + glycine. It carries out the reaction L-2-aminoadipate + glyoxylate = 2-oxoadipate + glycine. The catalysed reaction is L-tyrosine + glyoxylate = 3-(4-hydroxyphenyl)pyruvate + glycine. It catalyses the reaction glyoxylate + L-phenylalanine = 3-phenylpyruvate + glycine. The enzyme catalyses L-tryptophan + glyoxylate = indole-3-pyruvate + glycine. It carries out the reaction L-leucine + glyoxylate = 4-methyl-2-oxopentanoate + glycine. The catalysed reaction is 2-oxobutanoate + L-kynurenine = (2S)-2-aminobutanoate + kynurenate + H2O. It catalyses the reaction 2-oxoadipate + L-kynurenine = L-2-aminoadipate + kynurenate + H2O. The protein operates within amino-acid degradation; L-lysine degradation via saccharopine pathway; glutaryl-CoA from L-lysine: step 4/6. With respect to regulation, kynurenine transaminase activity is competitively inhibited by aminoadipate, asparagine, glutamate, histidine, cysteine, lysine, 3-hydroxy-kynurenine and phenylalanine. In terms of biological role, transaminase with broad substrate specificity. Has transaminase activity towards aminoadipate, kynurenine, methionine and glutamate. Shows activity also towards tryptophan, aspartate and hydroxykynurenine. Accepts a variety of oxo-acids as amino-group acceptors, with a preference for 2-oxoglutarate, 2-oxocaproic acid, phenylpyruvate and alpha-oxo-gamma-methiol butyric acid. Can also use glyoxylate as amino-group acceptor (in vitro). This chain is Kynurenine/alpha-aminoadipate aminotransferase, mitochondrial, found in Homo sapiens (Human).